The following is a 213-amino-acid chain: ATP synthase peripheral stalk subunit OSCP, mitochondrial (213 aa).

The transit peptide at 1–23 (MAAPAVSGVSQQVRYFGTSVVRP) directs the protein to the mitochondrion. The SIFI-degron signature appears at 5–23 (AVSGVSQQVRYFGTSVVRP). N6-acetyllysine occurs at positions 54, 60, 70, and 73. An N6-succinyllysine modification is found at lysine 90. An N6-acetyllysine; alternate mark is found at lysine 158 and lysine 162. N6-succinyllysine; alternate occurs at positions 158 and 162. 3 positions are modified to N6-acetyllysine: lysine 172, lysine 176, and lysine 192. Position 199 is an N6-succinyllysine (lysine 199).

This sequence belongs to the ATPase delta chain family. Component of the ATP synthase complex composed at least of ATP5F1A/subunit alpha, ATP5F1B/subunit beta, ATP5MC1/subunit c (homooctomer), MT-ATP6/subunit a, MT-ATP8/subunit 8, ATP5ME/subunit e, ATP5MF/subunit f, ATP5MG/subunit g, ATP5MK/subunit k, ATP5MJ/subunit j, ATP5F1C/subunit gamma, ATP5F1D/subunit delta, ATP5F1E/subunit epsilon, ATP5PF/subunit F6, ATP5PB/subunit b, ATP5PD/subunit d, ATP5PO/subunit OSCP. ATP synthase complex consists of a soluble F(1) head domain (subunits alpha(3) and beta(3)) - the catalytic core - and a membrane F(0) domain - the membrane proton channel (subunits c, a, 8, e, f, g, k and j). These two domains are linked by a central stalk (subunits gamma, delta, and epsilon) rotating inside the F1 region and a stationary peripheral stalk (subunits F6, b, d, and OSCP). In terms of processing, acetylation at Lys-162 decreases ATP production. Deacetylated by SIRT3. In response to mitochondrial stress, the precursor protein is ubiquitinated by the SIFI complex in the cytoplasm before mitochondrial import, leading to its degradation. Within the SIFI complex, UBR4 initiates ubiquitin chain that are further elongated or branched by KCMF1.

Its subcellular location is the mitochondrion. It localises to the mitochondrion inner membrane. In terms of biological role, subunit OSCP, of the mitochondrial membrane ATP synthase complex (F(1)F(0) ATP synthase or Complex V) that produces ATP from ADP in the presence of a proton gradient across the membrane which is generated by electron transport complexes of the respiratory chain. ATP synthase complex consist of a soluble F(1) head domain - the catalytic core - and a membrane F(1) domain - the membrane proton channel. These two domains are linked by a central stalk rotating inside the F(1) region and a stationary peripheral stalk. During catalysis, ATP synthesis in the catalytic domain of F(1) is coupled via a rotary mechanism of the central stalk subunits to proton translocation. In vivo, can only synthesize ATP although its ATP hydrolase activity can be activated artificially in vitro. Part of the complex F(0) domain. Part of the complex F(0) domain and the peripheric stalk, which acts as a stator to hold the catalytic alpha(3)beta(3) subcomplex and subunit a/ATP6 static relative to the rotary elements. The chain is ATP synthase peripheral stalk subunit OSCP, mitochondrial from Callithrix jacchus (White-tufted-ear marmoset).